Reading from the N-terminus, the 485-residue chain is Glutamate--tRNA ligase (485 aa).

The 'HIGH' region motif lies at 11-21; it reads PSPTGLLHIGN. The short motif at 255–259 is the 'KMSKS' region element; sequence KLSKR. Position 258 (Lys-258) interacts with ATP.

The protein belongs to the class-I aminoacyl-tRNA synthetase family. Glutamate--tRNA ligase type 1 subfamily. In terms of assembly, monomer.

The protein localises to the cytoplasm. The catalysed reaction is tRNA(Glu) + L-glutamate + ATP = L-glutamyl-tRNA(Glu) + AMP + diphosphate. Its function is as follows. Catalyzes the attachment of glutamate to tRNA(Glu) in a two-step reaction: glutamate is first activated by ATP to form Glu-AMP and then transferred to the acceptor end of tRNA(Glu). This is Glutamate--tRNA ligase from Streptococcus sanguinis (strain SK36).